The sequence spans 322 residues: D-specific alpha-keto acid dehydrogenase (322 aa).

NAD(+)-binding positions include 156–157 (QI), 229–231 (TGR), and Asp-255. Arg-231 is an active-site residue. Glu-260 is an active-site residue. Residue His-292 is the Proton donor of the active site. 292 to 295 (HTAY) lines the NAD(+) pocket.

It belongs to the D-isomer specific 2-hydroxyacid dehydrogenase family.

The catalysed reaction is a (2R)-2-hydroxycarboxylate + NADP(+) = a 2-oxocarboxylate + NADPH + H(+). The enzyme catalyses a (2R)-2-hydroxycarboxylate + NAD(+) = a 2-oxocarboxylate + NADH + H(+). It carries out the reaction (R)-lactate + NADP(+) = pyruvate + NADPH + H(+). It catalyses the reaction (R)-lactate + NAD(+) = pyruvate + NADH + H(+). The catalysed reaction is (2R)-hydroxybutanoate + NADP(+) = 2-oxobutanoate + NADPH + H(+). Its function is as follows. Required for high-level resistance to glycopeptide antibiotics. Catalyzes the reduction of 2-keto acids to 2-D-hydroxy acids, exhibiting highest catalytic efficiency with pyruvate and 2-oxobutanoate/alpha-ketobutyrate as substrates, producing D-lactate and (2R)-hydroxybutanoate, respectively. Together with D-alanine--D-lactate ligase VanA, gives rise to peptidoglycan precursors that terminate in the depsipeptide D-alanine-D-lactate rather than the dipeptide D-alanine-D-alanine thus preventing vancomycin binding. Shows a slight preference for NADPH over NADH as the electron donor. This Enterococcus faecium (Streptococcus faecium) protein is D-specific alpha-keto acid dehydrogenase.